Reading from the N-terminus, the 77-residue chain is Protein AC43 (77 aa).

Plays a role in the production of occlusion bodies as well as expression of the polyhedrin gene. This is Protein AC43 from Autographa californica nuclear polyhedrosis virus (AcMNPV).